Consider the following 462-residue polypeptide: Kinetochore protein Nuf2-B (462 aa).

The stretch at 143 to 462 (SGYKSALENV…AELNRRLSRQ (320 aa)) forms a coiled coil. Residues 236 to 259 (EQERMKSQIVESPEQRKSKTERMK) are disordered. Basic and acidic residues predominate over residues 248–259 (PEQRKSKTERMK).

Belongs to the NUF2 family. As to quaternary structure, component of the NDC80 complex, which is composed of ndc80, cdca1, spbc24 and spbc25. The NDC80 complex interacts with mis12 and zwint.

Its subcellular location is the nucleus. It is found in the chromosome. The protein localises to the centromere. The protein resides in the kinetochore. Functionally, acts as a component of the essential kinetochore-associated NDC80 complex, which is required for chromosome segregation and spindle checkpoint activity. Required for kinetochore integrity and the organization of stable microtubule binding sites in the outer plate of the kinetochore. The NDC80 complex synergistically enhances the affinity of the SKA1 complex for microtubules and may allow the NDC80 complex to track depolymerizing microtubules. The protein is Kinetochore protein Nuf2-B (nuf2-b) of Xenopus laevis (African clawed frog).